The sequence spans 149 residues: Large ribosomal subunit protein bL9 (149 aa).

It belongs to the bacterial ribosomal protein bL9 family.

Binds to the 23S rRNA. The polypeptide is Large ribosomal subunit protein bL9 (Persephonella marina (strain DSM 14350 / EX-H1)).